The sequence spans 230 residues: NADH dehydrogenase [ubiquinone] iron-sulfur protein 8, mitochondrial (230 aa).

The N-terminal 42 residues, 1–42 (MAAILARKSLSALRSRQLVLAGQAWQQGANTSNGTLLGTRTF), are a transit peptide targeting the mitochondrion. 2 4Fe-4S ferredoxin-type domains span residues 122 to 151 (RRYP…IEAE) and 161 to 190 (TRYD…EGPN). Residues cysteine 131, cysteine 134, cysteine 137, cysteine 141, cysteine 170, cysteine 173, cysteine 176, and cysteine 180 each contribute to the [4Fe-4S] cluster site.

Belongs to the complex I 23 kDa subunit family. In terms of assembly, complex I is composed of about 45 different subunits. This is a component of the iron-sulfur (IP) fragment of the enzyme. [4Fe-4S] cluster serves as cofactor.

It is found in the mitochondrion. The catalysed reaction is a ubiquinone + NADH + 5 H(+)(in) = a ubiquinol + NAD(+) + 4 H(+)(out). In terms of biological role, core subunit of the mitochondrial membrane respiratory chain NADH dehydrogenase (Complex I) that is believed to belong to the minimal assembly required for catalysis. Complex I functions in the transfer of electrons from NADH to the respiratory chain. The immediate electron acceptor for the enzyme is believed to be ubiquinone. May donate electrons to ubiquinone. This Nicotiana tabacum (Common tobacco) protein is NADH dehydrogenase [ubiquinone] iron-sulfur protein 8, mitochondrial.